Reading from the N-terminus, the 157-residue chain is 6,7-dimethyl-8-ribityllumazine synthase (157 aa).

5-amino-6-(D-ribitylamino)uracil-binding positions include Phe-30, Ala-64–Glu-66, and Cys-88–Ile-90. Glu-93–Thr-94 lines the (2S)-2-hydroxy-3-oxobutyl phosphate pocket. The active-site Proton donor is the His-96. Asn-121 contacts 5-amino-6-(D-ribitylamino)uracil. Arg-135 contacts (2S)-2-hydroxy-3-oxobutyl phosphate.

The protein belongs to the DMRL synthase family.

The catalysed reaction is (2S)-2-hydroxy-3-oxobutyl phosphate + 5-amino-6-(D-ribitylamino)uracil = 6,7-dimethyl-8-(1-D-ribityl)lumazine + phosphate + 2 H2O + H(+). The protein operates within cofactor biosynthesis; riboflavin biosynthesis; riboflavin from 2-hydroxy-3-oxobutyl phosphate and 5-amino-6-(D-ribitylamino)uracil: step 1/2. Catalyzes the formation of 6,7-dimethyl-8-ribityllumazine by condensation of 5-amino-6-(D-ribitylamino)uracil with 3,4-dihydroxy-2-butanone 4-phosphate. This is the penultimate step in the biosynthesis of riboflavin. The protein is 6,7-dimethyl-8-ribityllumazine synthase of Albidiferax ferrireducens (strain ATCC BAA-621 / DSM 15236 / T118) (Rhodoferax ferrireducens).